We begin with the raw amino-acid sequence, 284 residues long: 4-hydroxybenzoate octaprenyltransferase (284 aa).

9 helical membrane-spanning segments follow: residues 19–39 (IGTL…AKGM), 42–62 (FDVL…GCVI), 93–113 (IVLF…MNPL), 114–134 (TIKL…MKRF), 136–156 (HLPQ…AWAA), 161–181 (LPSI…AYDT), 209–229 (LMVG…GMHY), 235–252 (FYWA…QQHL), and 264–284 (AFLN…ITFW).

This sequence belongs to the UbiA prenyltransferase family. Requires Mg(2+) as cofactor.

The protein localises to the cell inner membrane. The catalysed reaction is all-trans-octaprenyl diphosphate + 4-hydroxybenzoate = 4-hydroxy-3-(all-trans-octaprenyl)benzoate + diphosphate. Its pathway is cofactor biosynthesis; ubiquinone biosynthesis. Functionally, catalyzes the prenylation of para-hydroxybenzoate (PHB) with an all-trans polyprenyl group. Mediates the second step in the final reaction sequence of ubiquinone-8 (UQ-8) biosynthesis, which is the condensation of the polyisoprenoid side chain with PHB, generating the first membrane-bound Q intermediate 3-octaprenyl-4-hydroxybenzoate. This is 4-hydroxybenzoate octaprenyltransferase from Vibrio atlanticus (strain LGP32) (Vibrio splendidus (strain Mel32)).